The primary structure comprises 117 residues: Large ribosomal subunit protein bL19 (117 aa).

This sequence belongs to the bacterial ribosomal protein bL19 family.

Its function is as follows. This protein is located at the 30S-50S ribosomal subunit interface and may play a role in the structure and function of the aminoacyl-tRNA binding site. In Leptothrix cholodnii (strain ATCC 51168 / LMG 8142 / SP-6) (Leptothrix discophora (strain SP-6)), this protein is Large ribosomal subunit protein bL19.